A 102-amino-acid polypeptide reads, in one-letter code: Small ribosomal subunit protein uS10 (102 aa).

This sequence belongs to the universal ribosomal protein uS10 family. In terms of assembly, part of the 30S ribosomal subunit.

Involved in the binding of tRNA to the ribosomes. The sequence is that of Small ribosomal subunit protein uS10 from Tropheryma whipplei (strain TW08/27) (Whipple's bacillus).